A 647-amino-acid polypeptide reads, in one-letter code: Threonine--tRNA ligase (647 aa).

Positions 1-61 (MINITFPDGA…TEDGSIEIVT (61 aa)) constitute a TGS domain. Positions 242–540 (DHRKLGKELD…LIENYKGAFP (299 aa)) are catalytic. Zn(2+)-binding residues include Cys-336, His-387, and His-517.

It belongs to the class-II aminoacyl-tRNA synthetase family. Homodimer. The cofactor is Zn(2+).

It localises to the cytoplasm. The enzyme catalyses tRNA(Thr) + L-threonine + ATP = L-threonyl-tRNA(Thr) + AMP + diphosphate + H(+). In terms of biological role, catalyzes the attachment of threonine to tRNA(Thr) in a two-step reaction: L-threonine is first activated by ATP to form Thr-AMP and then transferred to the acceptor end of tRNA(Thr). Also edits incorrectly charged L-seryl-tRNA(Thr). The chain is Threonine--tRNA ligase from Streptococcus pneumoniae serotype 2 (strain D39 / NCTC 7466).